A 160-amino-acid chain; its full sequence is Phosphopantetheine adenylyltransferase (160 aa).

Substrate is bound at residue threonine 9. ATP contacts are provided by residues 9–10 and histidine 17; that span reads TF. Residues lysine 41, leucine 73, and arginine 87 each contribute to the substrate site. Residues 88 to 90, glutamate 98, and 123 to 129 contribute to the ATP site; these read GLR and YSFISST.

It belongs to the bacterial CoaD family. As to quaternary structure, homohexamer. It depends on Mg(2+) as a cofactor.

Its subcellular location is the cytoplasm. It carries out the reaction (R)-4'-phosphopantetheine + ATP + H(+) = 3'-dephospho-CoA + diphosphate. The protein operates within cofactor biosynthesis; coenzyme A biosynthesis; CoA from (R)-pantothenate: step 4/5. Functionally, reversibly transfers an adenylyl group from ATP to 4'-phosphopantetheine, yielding dephospho-CoA (dPCoA) and pyrophosphate. The protein is Phosphopantetheine adenylyltransferase of Ectopseudomonas mendocina (strain ymp) (Pseudomonas mendocina).